Consider the following 546-residue polypeptide: Chaperonin GroEL (546 aa).

ATP contacts are provided by residues 29–32 (TMGP), Lys-50, 86–90 (DGTTT), Gly-414, and Asp-492.

The protein belongs to the chaperonin (HSP60) family. As to quaternary structure, forms a cylinder of 14 subunits composed of two heptameric rings stacked back-to-back. Interacts with the co-chaperonin GroES.

The protein resides in the cytoplasm. The catalysed reaction is ATP + H2O + a folded polypeptide = ADP + phosphate + an unfolded polypeptide.. Functionally, together with its co-chaperonin GroES, plays an essential role in assisting protein folding. The GroEL-GroES system forms a nano-cage that allows encapsulation of the non-native substrate proteins and provides a physical environment optimized to promote and accelerate protein folding. In Helicobacter pylori (strain P12), this protein is Chaperonin GroEL.